The chain runs to 469 residues: Adenosylhomocysteinase (469 aa).

T63, D139, and E164 together coordinate substrate. Residue 165-167 (TTT) participates in NAD(+) binding. Substrate-binding residues include K194 and D198. Residues N199, 228-233 (GYGDVG), E251, N300, 321-323 (IGH), and N375 each bind NAD(+).

Belongs to the adenosylhomocysteinase family. Requires NAD(+) as cofactor.

It is found in the cytoplasm. The enzyme catalyses S-adenosyl-L-homocysteine + H2O = L-homocysteine + adenosine. The protein operates within amino-acid biosynthesis; L-homocysteine biosynthesis; L-homocysteine from S-adenosyl-L-homocysteine: step 1/1. Functionally, may play a key role in the regulation of the intracellular concentration of adenosylhomocysteine. The polypeptide is Adenosylhomocysteinase (Pseudomonas putida (strain ATCC 700007 / DSM 6899 / JCM 31910 / BCRC 17059 / LMG 24140 / F1)).